A 397-amino-acid chain; its full sequence is Ubiquitin-like modifier-activating enzyme 5 (397 aa).

ATP is bound by residues Gly-76, Asp-97, Lys-120, Asn-143, and Asn-177. Zn(2+) contacts are provided by Cys-219 and Cys-222. Catalysis depends on Cys-243, which acts as the Glycyl thioester intermediate. Zn(2+)-binding residues include Cys-296 and Cys-301. The tract at residues Leu-362–Asp-384 is disordered. Residues Thr-375–Asp-384 are compositionally biased toward low complexity.

Belongs to the ubiquitin-activating E1 family. UBA5 subfamily.

Functionally, E1-like enzyme which activates UFM1. The chain is Ubiquitin-like modifier-activating enzyme 5 from Aedes aegypti (Yellowfever mosquito).